The sequence spans 302 residues: Protoheme IX farnesyltransferase (302 aa).

9 helical membrane passes run 26–46 (VVVL…PGQV), 48–68 (WVAL…AAAL), 98–118 (VLGF…LWIN), 120–140 (LTAA…TLYL), 148–168 (IVIG…AVTG), 174–194 (ALLL…ALAV), 221–241 (ILLY…TFMG), 244–264 (LYLA…VRLL), and 280–300 (IIYL…PVWL).

This sequence belongs to the UbiA prenyltransferase family. Protoheme IX farnesyltransferase subfamily.

It is found in the cell inner membrane. It catalyses the reaction heme b + (2E,6E)-farnesyl diphosphate + H2O = Fe(II)-heme o + diphosphate. It participates in porphyrin-containing compound metabolism; heme O biosynthesis; heme O from protoheme: step 1/1. Converts heme B (protoheme IX) to heme O by substitution of the vinyl group on carbon 2 of heme B porphyrin ring with a hydroxyethyl farnesyl side group. The chain is Protoheme IX farnesyltransferase from Alkalilimnicola ehrlichii (strain ATCC BAA-1101 / DSM 17681 / MLHE-1).